The following is a 423-amino-acid chain: Probable sucrose-phosphatase 1 (423 aa).

The protein belongs to the sucrose phosphatase family. As to quaternary structure, homodimer. Mg(2+) serves as cofactor.

The enzyme catalyses sucrose 6(F)-phosphate + H2O = sucrose + phosphate. The protein operates within glycan biosynthesis; sucrose biosynthesis; sucrose from D-fructose 6-phosphate and UDP-alpha-D-glucose: step 2/2. Its function is as follows. Catalyzes the final step of sucrose synthesis. The protein is Probable sucrose-phosphatase 1 (SPP1) of Arabidopsis thaliana (Mouse-ear cress).